Reading from the N-terminus, the 381-residue chain is Molybdenum import ATP-binding protein ModC (381 aa).

The 234-residue stretch at 5–238 (SRSIQAQFRG…PALPLAASRD (234 aa)) folds into the ABC transporter domain. ATP is bound at residue 37–44 (GPSGCGKS). A Mop domain is found at 297-367 (NTSILNVLPA…VKGVALAPGR (71 aa)).

This sequence belongs to the ABC transporter superfamily. Molybdate importer (TC 3.A.1.8) family. The complex is composed of two ATP-binding proteins (ModC), two transmembrane proteins (ModB) and a solute-binding protein (ModA).

Its subcellular location is the cell inner membrane. The catalysed reaction is molybdate(out) + ATP + H2O = molybdate(in) + ADP + phosphate + H(+). Its function is as follows. Part of the ABC transporter complex ModABC involved in molybdenum import. Responsible for energy coupling to the transport system. This chain is Molybdenum import ATP-binding protein ModC, found in Rhodopseudomonas palustris (strain BisB18).